The following is a 227-amino-acid chain: Glutathione S-transferase U7 (227 aa).

In terms of domain architecture, GST N-terminal spans 8–87; that stretch reads EEVKLLGMWA…YIDETWRDNP (80 aa). Residues 18–19, 44–45, 58–59, and 71–72 contribute to the glutathione site; these read SP, NK, MI, and ES. The GST C-terminal domain maps to 92–215; the sequence is DPYERTMARF…PPEDEHLKYI (124 aa).

This sequence belongs to the GST superfamily. Tau family.

It is found in the cytoplasm. Its subcellular location is the cytosol. It catalyses the reaction RX + glutathione = an S-substituted glutathione + a halide anion + H(+). Its function is as follows. May be involved in the conjugation of reduced glutathione to a wide number of exogenous and endogenous hydrophobic electrophiles and have a detoxification role against certain herbicides. In Arabidopsis thaliana (Mouse-ear cress), this protein is Glutathione S-transferase U7 (GSTU7).